The sequence spans 726 residues: MSAALEDIKLEDIPVDDIDFSDLEKQYSVNDTVSFDQYIVVCGAPVIPEGKVAVLKKALTGLFSKAGKVVDIEFPIEDGKTKGFLFVECASPADGNKIIKAFHTKRLDLKHRLFIYTMRDVEKYNDKNFPTEFVEPEIPDFFPTSTLKSWLSDEDGRDQFVLQANEMTTVLWNSAIEDEESVVESRKNWSTNYIRFSPKGTYLFSYHPQGVVMWGGPHFDRLRRFYHPNVRTSSVSPSEKFLVTYSPDPIVVDEEDADCPFTKKNEGHQLCIWDIDSGLLQSTFPVVKSSYLQWPLVRWSYNDQYCARMVGETLVVHDVKKGFAVMDNKTLKVPGIRDFSFAPTGVKIAPFRANDKESVILAYWTPETNNMSCKATIVDVERSRVLKTVNLVQVSNVTLHWQSDSEFLCFNVERHTKSKKTQFSNLEICKLTEKDIPGDKIELKDCVVDFAWEPHGNRFGVIAVRETGDDNIAIPKNVATFFAPEKRDVKDKSTGVKKWLEVASITDKFSNTISWSPAGRYVVVATLVKPNVRRSDFVFYDMDFATDKNMNVTKDVHASLKEVATNSFPSATDMAWDPSGRFLAVWSSSLKHKMENGYKVFNVAGTIVKEEPLNSFKNFAWRPRPASLLTNAEKKKIRKNLKEWTAQFAEQDAMEADAATRDMILRQREMLKDWTEYRAEIGARFEEEFGYKTFNMIPLSNSEDDFTSVEEVKEEVLEESEEKVVE.

The sufficient for interaction with HCR1 and TIF32 stretch occupies residues 1–94 (MSAALEDIKL…LFVECASPAD (94 aa)). Positions 1 to 219 (MSAALEDIKL…GVVMWGGPHF (219 aa)) are sufficient for interaction with PIC8. Residues 37–120 (QYIVVCGAPV…HRLFIYTMRD (84 aa)) form the RRM domain. WD repeat units lie at residues 142 to 182 (FPTS…EESV), 186 to 224 (RKNW…RLRR), 235 to 283 (VSPS…LQST), 331 to 374 (LKVP…MSCK), 442 to 485 (ELKD…FAPE), 505 to 549 (ITDK…TDKN), and 566 to 611 (NSFP…VKEE).

This sequence belongs to the eIF-3 subunit B family. As to quaternary structure, component of the eukaryotic translation initiation factor 3 (eIF-3) complex.

It is found in the cytoplasm. Its function is as follows. RNA-binding component of the eukaryotic translation initiation factor 3 (eIF-3) complex, which is involved in protein synthesis of a specialized repertoire of mRNAs and, together with other initiation factors, stimulates binding of mRNA and methionyl-tRNAi to the 40S ribosome. The eIF-3 complex specifically targets and initiates translation of a subset of mRNAs involved in cell proliferation. This chain is Eukaryotic translation initiation factor 3 subunit B, found in Vanderwaltozyma polyspora (strain ATCC 22028 / DSM 70294 / BCRC 21397 / CBS 2163 / NBRC 10782 / NRRL Y-8283 / UCD 57-17) (Kluyveromyces polysporus).